Consider the following 291-residue polypeptide: 2-C-methyl-D-erythritol 4-phosphate cytidylyltransferase (291 aa).

Residues 1–23 (MTERDFDTPVETPTVQPAPAQGA) form a disordered region.

Belongs to the IspD/TarI cytidylyltransferase family. IspD subfamily.

It carries out the reaction 2-C-methyl-D-erythritol 4-phosphate + CTP + H(+) = 4-CDP-2-C-methyl-D-erythritol + diphosphate. The protein operates within isoprenoid biosynthesis; isopentenyl diphosphate biosynthesis via DXP pathway; isopentenyl diphosphate from 1-deoxy-D-xylulose 5-phosphate: step 2/6. In terms of biological role, catalyzes the formation of 4-diphosphocytidyl-2-C-methyl-D-erythritol from CTP and 2-C-methyl-D-erythritol 4-phosphate (MEP). The chain is 2-C-methyl-D-erythritol 4-phosphate cytidylyltransferase from Bifidobacterium longum (strain NCC 2705).